The primary structure comprises 635 residues: Threonine--tRNA ligase (635 aa).

The TGS domain maps to 1-61 (MVSIRLPDGS…DRDAALAIIT (61 aa)). Residues 242-533 (DHRKLGKQLD…LIEHHAGAMP (292 aa)) are catalytic. Residues Cys-333, His-384, and His-510 each contribute to the Zn(2+) site.

This sequence belongs to the class-II aminoacyl-tRNA synthetase family. As to quaternary structure, homodimer. Requires Zn(2+) as cofactor.

Its subcellular location is the cytoplasm. It catalyses the reaction tRNA(Thr) + L-threonine + ATP = L-threonyl-tRNA(Thr) + AMP + diphosphate + H(+). Its function is as follows. Catalyzes the attachment of threonine to tRNA(Thr) in a two-step reaction: L-threonine is first activated by ATP to form Thr-AMP and then transferred to the acceptor end of tRNA(Thr). Also edits incorrectly charged L-seryl-tRNA(Thr). This chain is Threonine--tRNA ligase, found in Burkholderia ambifaria (strain ATCC BAA-244 / DSM 16087 / CCUG 44356 / LMG 19182 / AMMD) (Burkholderia cepacia (strain AMMD)).